Consider the following 547-residue polypeptide: Chaperonin GroEL (547 aa).

ATP contacts are provided by residues 30–33 (TLGP), lysine 51, 87–91 (DGTTT), glycine 415, and aspartate 495.

The protein belongs to the chaperonin (HSP60) family. As to quaternary structure, forms a cylinder of 14 subunits composed of two heptameric rings stacked back-to-back. Interacts with the co-chaperonin GroES.

It localises to the cytoplasm. The enzyme catalyses ATP + H2O + a folded polypeptide = ADP + phosphate + an unfolded polypeptide.. Functionally, together with its co-chaperonin GroES, plays an essential role in assisting protein folding. The GroEL-GroES system forms a nano-cage that allows encapsulation of the non-native substrate proteins and provides a physical environment optimized to promote and accelerate protein folding. The sequence is that of Chaperonin GroEL from Rhizobium leguminosarum bv. trifolii (strain WSM2304).